We begin with the raw amino-acid sequence, 388 residues long: Cobalt-precorrin-5B C(1)-methyltransferase (388 aa).

This sequence belongs to the CbiD family.

It catalyses the reaction Co-precorrin-5B + S-adenosyl-L-methionine = Co-precorrin-6A + S-adenosyl-L-homocysteine. The protein operates within cofactor biosynthesis; adenosylcobalamin biosynthesis; cob(II)yrinate a,c-diamide from sirohydrochlorin (anaerobic route): step 6/10. Functionally, catalyzes the methylation of C-1 in cobalt-precorrin-5B to form cobalt-precorrin-6A. This is Cobalt-precorrin-5B C(1)-methyltransferase from Rubrobacter xylanophilus (strain DSM 9941 / JCM 11954 / NBRC 16129 / PRD-1).